Consider the following 378-residue polypeptide: Chaperone protein DnaJ (378 aa).

Residues 5-69 enclose the J domain; the sequence is DYYEVLGVSK…NKRANYDQFG (65 aa). The CR-type zinc finger occupies 135 to 217; that stretch reads GSEKEISIRK…CHGKGTENKN (83 aa). Residues cysteine 148, cysteine 151, cysteine 165, cysteine 168, cysteine 191, cysteine 194, cysteine 205, and cysteine 208 each coordinate Zn(2+). 4 CXXCXGXG motif repeats span residues 148 to 155, 165 to 172, 191 to 198, and 205 to 212; these read CHTCDGEG, CHYCNGSG, CPVCSGSG, and CPTCHGKG.

Belongs to the DnaJ family. As to quaternary structure, homodimer. Requires Zn(2+) as cofactor.

It localises to the cytoplasm. Its function is as follows. Participates actively in the response to hyperosmotic and heat shock by preventing the aggregation of stress-denatured proteins and by disaggregating proteins, also in an autonomous, DnaK-independent fashion. Unfolded proteins bind initially to DnaJ; upon interaction with the DnaJ-bound protein, DnaK hydrolyzes its bound ATP, resulting in the formation of a stable complex. GrpE releases ADP from DnaK; ATP binding to DnaK triggers the release of the substrate protein, thus completing the reaction cycle. Several rounds of ATP-dependent interactions between DnaJ, DnaK and GrpE are required for fully efficient folding. Also involved, together with DnaK and GrpE, in the DNA replication of plasmids through activation of initiation proteins. This Staphylococcus saprophyticus subsp. saprophyticus (strain ATCC 15305 / DSM 20229 / NCIMB 8711 / NCTC 7292 / S-41) protein is Chaperone protein DnaJ.